We begin with the raw amino-acid sequence, 398 residues long: Phosphoglycerate kinase (398 aa).

Residues 21–23 (DFN), Arg-41, 64–67 (HLGR), Arg-123, and Arg-156 contribute to the substrate site. ATP contacts are provided by residues Lys-207, Gly-294, Glu-325, and 354-357 (GGDS).

The protein belongs to the phosphoglycerate kinase family. As to quaternary structure, monomer.

It is found in the cytoplasm. The enzyme catalyses (2R)-3-phosphoglycerate + ATP = (2R)-3-phospho-glyceroyl phosphate + ADP. It participates in carbohydrate degradation; glycolysis; pyruvate from D-glyceraldehyde 3-phosphate: step 2/5. This is Phosphoglycerate kinase from Salinibacter ruber (strain DSM 13855 / M31).